The sequence spans 148 residues: MSIIDNRKAFFDYHIEERYEAGLVLEGWEVKALRAGRGQIKEGYVVVKHAEIFLIGTHISPLPEASTHIKPDPVRTRKLLLHRDEIKKLIGKVEQRGYTLVPLNFHYKGGRVKCEIGLAKGKKLHDKRETEKKRDWEREKARIMRSAT.

Residues lysine 123–threonine 148 form a disordered region. Residues aspartate 126 to arginine 142 show a composition bias toward basic and acidic residues.

It belongs to the SmpB family.

The protein resides in the cytoplasm. Required for rescue of stalled ribosomes mediated by trans-translation. Binds to transfer-messenger RNA (tmRNA), required for stable association of tmRNA with ribosomes. tmRNA and SmpB together mimic tRNA shape, replacing the anticodon stem-loop with SmpB. tmRNA is encoded by the ssrA gene; the 2 termini fold to resemble tRNA(Ala) and it encodes a 'tag peptide', a short internal open reading frame. During trans-translation Ala-aminoacylated tmRNA acts like a tRNA, entering the A-site of stalled ribosomes, displacing the stalled mRNA. The ribosome then switches to translate the ORF on the tmRNA; the nascent peptide is terminated with the 'tag peptide' encoded by the tmRNA and targeted for degradation. The ribosome is freed to recommence translation, which seems to be the essential function of trans-translation. The sequence is that of SsrA-binding protein from Burkholderia pseudomallei (strain 1710b).